A 415-amino-acid polypeptide reads, in one-letter code: Cyclin-A2 (415 aa).

Belongs to the cyclin family. Cyclin AB subfamily. In terms of assembly, interacts with the CDK1 and CDK2 protein kinases to form serine/threonine kinase holoenzyme complexes. In terms of tissue distribution, ubiquitous.

It localises to the nucleus. It is found in the cytoplasm. Cyclin which controls both the G1/S and the G2/M transition phases of the cell cycle. Functions through the formation of specific serine/threonine kinase holoenzyme complexes with the cyclin-dependent protein kinases CDK1 and CDK2. The cyclin subunit confers the substrate specificity of these complexes and differentially interacts with and activates CDK1 and CDK2 throughout the cell cycle. This is Cyclin-A2 (ccna2) from Xenopus laevis (African clawed frog).